The primary structure comprises 306 residues: Curved DNA-binding protein (306 aa).

Residues 5–69 enclose the J domain; the sequence is DYYAIMGVKP…QRRAEYDQMW (65 aa).

The protein localises to the cytoplasm. It is found in the nucleoid. Functionally, DNA-binding protein that preferentially recognizes a curved DNA sequence. It is probably a functional analog of DnaJ; displays overlapping activities with DnaJ, but functions under different conditions, probably acting as a molecular chaperone in an adaptive response to environmental stresses other than heat shock. Lacks autonomous chaperone activity; binds native substrates and targets them for recognition by DnaK. Its activity is inhibited by the binding of CbpM. The protein is Curved DNA-binding protein of Escherichia coli (strain SMS-3-5 / SECEC).